A 560-amino-acid polypeptide reads, in one-letter code: Dihydroxy-acid dehydratase (560 aa).

A [2Fe-2S] cluster-binding site is contributed by Cys50. Asp82 provides a ligand contact to Mg(2+). [2Fe-2S] cluster is bound at residue Cys123. Residues Asp124 and Lys125 each coordinate Mg(2+). At Lys125 the chain carries N6-carboxylysine. Cys195 is a [2Fe-2S] cluster binding site. Glu447 lines the Mg(2+) pocket. The Proton acceptor role is filled by Ser473.

It belongs to the IlvD/Edd family. In terms of assembly, homodimer. [2Fe-2S] cluster serves as cofactor. Requires Mg(2+) as cofactor.

The catalysed reaction is (2R)-2,3-dihydroxy-3-methylbutanoate = 3-methyl-2-oxobutanoate + H2O. It catalyses the reaction (2R,3R)-2,3-dihydroxy-3-methylpentanoate = (S)-3-methyl-2-oxopentanoate + H2O. The protein operates within amino-acid biosynthesis; L-isoleucine biosynthesis; L-isoleucine from 2-oxobutanoate: step 3/4. It participates in amino-acid biosynthesis; L-valine biosynthesis; L-valine from pyruvate: step 3/4. In terms of biological role, functions in the biosynthesis of branched-chain amino acids. Catalyzes the dehydration of (2R,3R)-2,3-dihydroxy-3-methylpentanoate (2,3-dihydroxy-3-methylvalerate) into 2-oxo-3-methylpentanoate (2-oxo-3-methylvalerate) and of (2R)-2,3-dihydroxy-3-methylbutanoate (2,3-dihydroxyisovalerate) into 2-oxo-3-methylbutanoate (2-oxoisovalerate), the penultimate precursor to L-isoleucine and L-valine, respectively. The chain is Dihydroxy-acid dehydratase from Thermosynechococcus vestitus (strain NIES-2133 / IAM M-273 / BP-1).